The primary structure comprises 357 residues: sn-glycerol-3-phosphate import ATP-binding protein UgpC (357 aa).

Residues Leu-4–Ile-235 enclose the ABC transporter domain. Gly-37–Ser-44 lines the ATP pocket.

Belongs to the ABC transporter superfamily. sn-glycerol-3-phosphate importer (TC 3.A.1.1.3) family. As to quaternary structure, the complex is composed of two ATP-binding proteins (UgpC), two transmembrane proteins (UgpA and UgpE) and a solute-binding protein (UgpB).

The protein resides in the cell inner membrane. It carries out the reaction sn-glycerol 3-phosphate(out) + ATP + H2O = sn-glycerol 3-phosphate(in) + ADP + phosphate + H(+). Part of the ABC transporter complex UgpBAEC involved in sn-glycerol-3-phosphate (G3P) import. Responsible for energy coupling to the transport system. This is sn-glycerol-3-phosphate import ATP-binding protein UgpC from Pectobacterium atrosepticum (strain SCRI 1043 / ATCC BAA-672) (Erwinia carotovora subsp. atroseptica).